The chain runs to 463 residues: Glycogen synthase (463 aa).

Lysine 15 contacts ADP-alpha-D-glucose.

This sequence belongs to the glycosyltransferase 1 family. Bacterial/plant glycogen synthase subfamily.

It catalyses the reaction [(1-&gt;4)-alpha-D-glucosyl](n) + ADP-alpha-D-glucose = [(1-&gt;4)-alpha-D-glucosyl](n+1) + ADP + H(+). It participates in glycan biosynthesis; glycogen biosynthesis. Functionally, synthesizes alpha-1,4-glucan chains using ADP-glucose. This chain is Glycogen synthase, found in Aquifex aeolicus (strain VF5).